Consider the following 750-residue polypeptide: Amyloid-beta A4 precursor protein-binding family A member 2 (750 aa).

Disordered regions lie at residues Met1–Glu94 and Asp143–Thr346. Residue Ser11 is modified to Phosphoserine. Residues Gly70–Thr80 are compositionally biased toward polar residues. A compositionally biased stretch (acidic residues) spans Ser81–Glu94. Residues His185–Thr271 form an STXBP1-binding region. A Phosphoserine modification is found at Ser209. Residues Asp219–Asp228 are compositionally biased toward acidic residues. 2 stretches are compositionally biased toward polar residues: residues Leu238–Glu248 and Ser332–Pro344. Residues Leu367–Asp556 enclose the PID domain. PDZ domains lie at Glu569–Ser654 and Thr660–Ala736.

In terms of assembly, part of a multimeric complex containing STXBP1 and syntaxin-1. Binds to the cytoplasmic domain of amyloid-beta protein, and to the nuclear factor NF-kappa-B/p65 via its PDZ domain. Interacts with the N-terminal domain of NECAB3. As to expression, specifically expressed in neurons, predominantly of the cerebellum, hippocampus, and spinal cord. Lesser extent in neurons of the cerebral cortex and anterior thalmic nuclei.

In terms of biological role, putative function in synaptic vesicle exocytosis by binding to STXBP1, an essential component of the synaptic vesicle exocytotic machinery. May modulate processing of the amyloid-beta precursor protein (APP) and hence formation of APP-beta. This is Amyloid-beta A4 precursor protein-binding family A member 2 (Apba2) from Mus musculus (Mouse).